We begin with the raw amino-acid sequence, 569 residues long: Proline--tRNA ligase (569 aa).

Belongs to the class-II aminoacyl-tRNA synthetase family. ProS type 1 subfamily. In terms of assembly, homodimer.

The protein resides in the cytoplasm. It carries out the reaction tRNA(Pro) + L-proline + ATP = L-prolyl-tRNA(Pro) + AMP + diphosphate. In terms of biological role, catalyzes the attachment of proline to tRNA(Pro) in a two-step reaction: proline is first activated by ATP to form Pro-AMP and then transferred to the acceptor end of tRNA(Pro). As ProRS can inadvertently accommodate and process non-cognate amino acids such as alanine and cysteine, to avoid such errors it has two additional distinct editing activities against alanine. One activity is designated as 'pretransfer' editing and involves the tRNA(Pro)-independent hydrolysis of activated Ala-AMP. The other activity is designated 'posttransfer' editing and involves deacylation of mischarged Ala-tRNA(Pro). The misacylated Cys-tRNA(Pro) is not edited by ProRS. This Latilactobacillus sakei subsp. sakei (strain 23K) (Lactobacillus sakei subsp. sakei) protein is Proline--tRNA ligase.